The following is a 262-amino-acid chain: High-affinity zinc uptake system membrane protein ZnuB (262 aa).

7 consecutive transmembrane segments (helical) span residues 8-28 (GWLA…FIVW), 54-74 (INSF…LAWL), 84-104 (TVLN…ISLI), 129-149 (ITIS…WHSI), 179-199 (FTIA…LLII), 215-235 (VIIA…LSVF), and 238-254 (TPAS…LCLI).

The protein belongs to the ABC-3 integral membrane protein family.

The protein resides in the cell membrane. Its function is as follows. Involved in the high-affinity zinc uptake transport system. The polypeptide is High-affinity zinc uptake system membrane protein ZnuB (znuB) (Buchnera aphidicola subsp. Acyrthosiphon pisum (strain APS) (Acyrthosiphon pisum symbiotic bacterium)).